Consider the following 510-residue polypeptide: Histidine ammonia-lyase (510 aa).

A cross-link (5-imidazolinone (Ala-Gly)) is located at residues 143-145 (ASG). Residue serine 144 is modified to 2,3-didehydroalanine (Ser).

The protein belongs to the PAL/histidase family. In terms of processing, contains an active site 4-methylidene-imidazol-5-one (MIO), which is formed autocatalytically by cyclization and dehydration of residues Ala-Ser-Gly.

The protein localises to the cytoplasm. The enzyme catalyses L-histidine = trans-urocanate + NH4(+). The protein operates within amino-acid degradation; L-histidine degradation into L-glutamate; N-formimidoyl-L-glutamate from L-histidine: step 1/3. The polypeptide is Histidine ammonia-lyase (Aliivibrio fischeri (strain ATCC 700601 / ES114) (Vibrio fischeri)).